Here is a 996-residue protein sequence, read N- to C-terminus: Cilia- and flagella-associated protein 251 (996 aa).

11 WD repeats span residues 73–114, 118–164, 168–211, 219–258, 282–319, 399–438, 445–485, 494–533, 547–593, 615–658, and 719–759; these read GHCN…PKKT, PHPN…EPCL, EFDR…KGFN, PSLKVLTQTVFIPDNTQVVTGTTDGHIIVWDISLIIEKVD, KGSNSINILKIQDNYLVIGSSNGSIRFYDFQYRIIAWF, SIVSPIIAMSCRPNSNVIGICCENGYLYEWNFQEKSSVLS, TDKE…WQNS, QGKPKVNMQVFSSDSKNLATMDADYAVSLFTIDHRQFDVN, IHHS…YSKQ, EQET…FKFC, and AHPD…LEQI. Positions 971-996 are disordered; sequence DLEGEERDDNIEDQYEDEENEEYDQD.

It localises to the cell projection. The protein resides in the cilium. In terms of biological role, as component of a spoke-associated complex, regulates ciliary mobility by mediating a stable and functional assembly of the radial spoke 3 (RS3). The chain is Cilia- and flagella-associated protein 251 from Tetrahymena thermophila (strain SB210).